Here is a 533-residue protein sequence, read N- to C-terminus: CTP synthase (533 aa).

Residues 1-270 (MVHLAKYIVV…GDYIVRRIEL (270 aa)) form an amidoligase domain region. S16 contributes to the CTP binding site. Residue S16 participates in UTP binding. 17-22 (SIGKGI) serves as a coordination point for ATP. Y57 provides a ligand contact to L-glutamine. D74 contributes to the ATP binding site. Mg(2+) contacts are provided by D74 and E144. CTP-binding positions include 151 to 153 (DIE), 191 to 196 (KTKPTQ), and K227. UTP is bound by residues 191 to 196 (KTKPTQ) and K227. Residues 303 to 533 (YVELEDSYIS…FLRAALERSR (231 aa)) form the Glutamine amidotransferase type-1 domain. G355 provides a ligand contact to L-glutamine. C382 functions as the Nucleophile; for glutamine hydrolysis in the catalytic mechanism. L-glutamine contacts are provided by residues 383–386 (LGMQ), E405, and R462. Residues H507 and E509 contribute to the active site.

It belongs to the CTP synthase family. In terms of assembly, homotetramer.

It carries out the reaction UTP + L-glutamine + ATP + H2O = CTP + L-glutamate + ADP + phosphate + 2 H(+). The catalysed reaction is L-glutamine + H2O = L-glutamate + NH4(+). The enzyme catalyses UTP + NH4(+) + ATP = CTP + ADP + phosphate + 2 H(+). It functions in the pathway pyrimidine metabolism; CTP biosynthesis via de novo pathway; CTP from UDP: step 2/2. With respect to regulation, allosterically activated by GTP, when glutamine is the substrate; GTP has no effect on the reaction when ammonia is the substrate. The allosteric effector GTP functions by stabilizing the protein conformation that binds the tetrahedral intermediate(s) formed during glutamine hydrolysis. Inhibited by the product CTP, via allosteric rather than competitive inhibition. Its function is as follows. Catalyzes the ATP-dependent amination of UTP to CTP with either L-glutamine or ammonia as the source of nitrogen. Regulates intracellular CTP levels through interactions with the four ribonucleotide triphosphates. The polypeptide is CTP synthase (Methanothermobacter thermautotrophicus (strain ATCC 29096 / DSM 1053 / JCM 10044 / NBRC 100330 / Delta H) (Methanobacterium thermoautotrophicum)).